Here is a 495-residue protein sequence, read N- to C-terminus: tRNA modification GTPase MnmE (495 aa).

Positions 28, 89, and 128 each coordinate (6S)-5-formyl-5,6,7,8-tetrahydrofolate. One can recognise a TrmE-type G domain in the interval 223-417 (GVRIVLGGCP…LRAQTLHLLH (195 aa)). Asparagine 233 contacts K(+). GTP-binding positions include 233 to 238 (NAGKSS), 252 to 258 (SSVPGTT), and 277 to 280 (DTAG). Serine 237 contributes to the Mg(2+) binding site. K(+) is bound by residues serine 252, valine 254, and threonine 257. Threonine 258 is a Mg(2+) binding site. Lysine 495 contributes to the (6S)-5-formyl-5,6,7,8-tetrahydrofolate binding site.

The protein belongs to the TRAFAC class TrmE-Era-EngA-EngB-Septin-like GTPase superfamily. TrmE GTPase family. In terms of assembly, homodimer. Heterotetramer of two MnmE and two MnmG subunits. K(+) serves as cofactor.

The protein resides in the cytoplasm. Exhibits a very high intrinsic GTPase hydrolysis rate. Involved in the addition of a carboxymethylaminomethyl (cmnm) group at the wobble position (U34) of certain tRNAs, forming tRNA-cmnm(5)s(2)U34. The sequence is that of tRNA modification GTPase MnmE from Treponema pallidum (strain Nichols).